A 47-amino-acid polypeptide reads, in one-letter code: Light-harvesting protein B800/850/890 alpha-2 chain (47 aa).

Residues 1–12 (MWRMWKILDYRR) are Cytoplasmic-facing. The chain crosses the membrane as a helical span at residues 13 to 33 (TVVLAHVGMAVLALLIHFILL). An a bacteriochlorophyll-binding site is contributed by histidine 29. The Periplasmic portion of the chain corresponds to 34–47 (STESFNWLEGNPYG).

This sequence belongs to the antenna complex alpha subunit family. As to quaternary structure, the core complex is formed by different alpha and beta chains, binding bacteriochlorophyll molecules, and arranged most probably in tetrameric structures disposed around the reaction center. The non-pigmented gamma chains may constitute additional components.

It is found in the cell inner membrane. Functionally, antenna complexes are light-harvesting systems, which transfer the excitation energy to the reaction centers. The sequence is that of Light-harvesting protein B800/850/890 alpha-2 chain from Halorhodospira halophila (strain DSM 244 / SL1) (Ectothiorhodospira halophila (strain DSM 244 / SL1)).